The primary structure comprises 161 residues: Endoribonuclease YbeY (161 aa).

The Zn(2+) site is built by histidine 121, histidine 125, and histidine 131.

This sequence belongs to the endoribonuclease YbeY family. It depends on Zn(2+) as a cofactor.

It is found in the cytoplasm. Functionally, single strand-specific metallo-endoribonuclease involved in late-stage 70S ribosome quality control and in maturation of the 3' terminus of the 16S rRNA. In Xanthomonas axonopodis pv. citri (strain 306), this protein is Endoribonuclease YbeY.